The following is a 153-amino-acid chain: Ribosome maturation factor RimP (153 aa).

This sequence belongs to the RimP family.

Its subcellular location is the cytoplasm. In terms of biological role, required for maturation of 30S ribosomal subunits. This chain is Ribosome maturation factor RimP, found in Glaesserella parasuis serovar 5 (strain SH0165) (Haemophilus parasuis).